Reading from the N-terminus, the 315-residue chain is Ornithine carbamoyltransferase (315 aa).

Residues 53–56, Gln-80, Arg-104, and 131–134 contribute to the carbamoyl phosphate site; these read STRT and HPCQ. L-ornithine-binding positions include Asn-163, Asp-227, and 231-232; that span reads SM. Carbamoyl phosphate contacts are provided by residues 267-268 and Arg-295; that span reads CL.

It belongs to the aspartate/ornithine carbamoyltransferase superfamily. OTCase family.

The protein localises to the cytoplasm. The enzyme catalyses carbamoyl phosphate + L-ornithine = L-citrulline + phosphate + H(+). It functions in the pathway amino-acid biosynthesis; L-arginine biosynthesis; L-arginine from L-ornithine and carbamoyl phosphate: step 1/3. In terms of biological role, reversibly catalyzes the transfer of the carbamoyl group from carbamoyl phosphate (CP) to the N(epsilon) atom of ornithine (ORN) to produce L-citrulline. In Rhodococcus jostii (strain RHA1), this protein is Ornithine carbamoyltransferase.